A 166-amino-acid chain; its full sequence is Large ribosomal subunit protein uL10 (166 aa).

Belongs to the universal ribosomal protein uL10 family. As to quaternary structure, part of the ribosomal stalk of the 50S ribosomal subunit. The N-terminus interacts with L11 and the large rRNA to form the base of the stalk. The C-terminus forms an elongated spine to which L12 dimers bind in a sequential fashion forming a multimeric L10(L12)X complex.

In terms of biological role, forms part of the ribosomal stalk, playing a central role in the interaction of the ribosome with GTP-bound translation factors. This chain is Large ribosomal subunit protein uL10, found in Staphylococcus aureus (strain JH1).